Here is a 242-residue protein sequence, read N- to C-terminus: Dihydropteridine reductase (242 aa).

12–36 (LVYGGRGALGSRCVQAFRARNWWVA) contacts NADP(+). An N6-succinyllysine mark is found at Lys-71, Lys-77, Lys-94, and Lys-100. Tyr-148 acts as the Proton acceptor in catalysis.

It belongs to the short-chain dehydrogenases/reductases (SDR) family. Homodimer.

The catalysed reaction is 5,6,7,8-tetrahydropteridine + NAD(+) = 6,7-dihydropteridine + NADH + H(+). The enzyme catalyses 5,6,7,8-tetrahydropteridine + NADP(+) = 6,7-dihydropteridine + NADPH + H(+). In terms of biological role, catalyzes the conversion of quinonoid dihydrobiopterin into tetrahydrobiopterin. This is Dihydropteridine reductase (QDPR) from Bos taurus (Bovine).